Consider the following 520-residue polypeptide: N-acetylgalactosamine-6-sulfatase (520 aa).

An N-terminal signal peptide occupies residues 1–23 (MAACTAAQQLLLVLSALGLLAAG). Positions 24-377 (APQPPNIVLL…PTMLKGQMMD (354 aa)) are catalytic domain. Residues Asp-36, Asp-37, and Cys-76 each contribute to the Ca(2+) site. Cys-76 acts as the Nucleophile in catalysis. 3-oxoalanine (Cys) is present on Cys-76. Residue His-139 is part of the active site. Asn-201 carries an N-linked (GlcNAc...) asparagine glycan. Ca(2+) is bound by residues Asp-286 and Asn-287. Cysteines 306 and 417 form a disulfide. Asn-421 carries N-linked (GlcNAc...) asparagine glycosylation. Intrachain disulfides connect Cys-487-Cys-516 and Cys-499-Cys-505.

The protein belongs to the sulfatase family. Homodimer. The cofactor is Ca(2+). Post-translationally, the conversion to 3-oxoalanine (also known as C-formylglycine, FGly), of a serine or cysteine residue in prokaryotes and of a cysteine residue in eukaryotes, is critical for catalytic activity. In terms of tissue distribution, widely expressed. Higher expression in liver and kidney.

The protein localises to the lysosome. The catalysed reaction is Hydrolysis of the 6-sulfate groups of the N-acetyl-D-galactosamine 6-sulfate units of chondroitin sulfate and of the D-galactose 6-sulfate units of keratan sulfate.. This is N-acetylgalactosamine-6-sulfatase (Galns) from Mus musculus (Mouse).